The following is a 198-amino-acid chain: MIISKDTKDLIFSILTILFVILCLNLIVFFSYNKAVEVNQSIFLMMLLLNLSFIIISLLYLLFLKKLVKFPALLNLFLGILFSFSSLQDLIISLNMFYQILSFSKFIYIFIIFIIIYILFLSFFLTAIKKKLKNKNTYSKPINKTIFIIAALIGIVFSKINFNIPQYYIISFLMYVFSCIFTFGFYHIYIYINSVKNN.

The protein resides in the cell membrane. Its function is as follows. Involved in copy number control of pIP404. This basic and hydrophobic protein may exert its effect from the cytoplasmic membrane. In Clostridium perfringens, this protein is Copy number protein (cop).